Consider the following 387-residue polypeptide: Postreplication repair E3 ubiquitin-protein ligase rad18 (387 aa).

Residues 29–67 form an RING-type zinc finger; sequence CLICHEYFRAPLITSCSHTFCSFCIRDYLREHPMCPACR. The interval 119 to 153 is disordered; sequence DSASGDEEWEDDLASNSSPASIAKKTSRDSKKRKR. Positions 122–131 are enriched in acidic residues; sequence SGDEEWEDDL. The UBZ4-type zinc-finger motif lies at 156 to 183; that stretch reads LVHCPACSNLVPHNQINQHLDSCLNSPS. 4 residues coordinate Zn(2+): Cys159, Cys162, His174, and Cys178. The tract at residues 174-206 is disordered; it reads HLDSCLNSPSSPSSSSSPYKNKDNSKSNSLLSF. The segment covering 177–192 has biased composition (low complexity); that stretch reads SCLNSPSSPSSSSSPY. Residues 240–274 enclose the SAP domain; the sequence is YALLSESKIRSKLSEMGLPTDGHKQLLQRRHAKWV. Residues 335–387 are disordered; that stretch reads KQSTTNKNDSLRNTAVESSTEPSTSNGFPATSVSPPLTIDLTNSQTGSDGPQS.

It belongs to the RAD18 family. As to quaternary structure, interacts with E2 ubc2, forming a complex with ubiquitin ligase activity.

It is found in the nucleus. The catalysed reaction is S-ubiquitinyl-[E2 ubiquitin-conjugating enzyme]-L-cysteine + [acceptor protein]-L-lysine = [E2 ubiquitin-conjugating enzyme]-L-cysteine + N(6)-ubiquitinyl-[acceptor protein]-L-lysine.. It functions in the pathway protein modification; protein ubiquitination. Its function is as follows. E3 RING-finger protein, member of the UBC2/RAD6 epistasis group. Associates to the E2 ubiquitin conjugating enzyme ubc2/rad6 to form the ubc2-rad18 ubiquitin ligase complex involved in postreplicative repair (PRR) of damaged DNA. The polypeptide is Postreplication repair E3 ubiquitin-protein ligase rad18 (rhp18) (Schizosaccharomyces pombe (strain 972 / ATCC 24843) (Fission yeast)).